Consider the following 152-residue polypeptide: Ribonuclease H (152 aa).

Positions 1 to 142 (MNSKVVIYTD…ADKLAVQGRE (142 aa)) constitute an RNase H type-1 domain. Residues aspartate 10, glutamate 48, aspartate 70, and aspartate 134 each coordinate Mg(2+).

The protein belongs to the RNase H family. Monomer. Mg(2+) serves as cofactor.

The protein localises to the cytoplasm. The catalysed reaction is Endonucleolytic cleavage to 5'-phosphomonoester.. Functionally, endonuclease that specifically degrades the RNA of RNA-DNA hybrids. The sequence is that of Ribonuclease H from Rickettsia akari (strain Hartford).